The following is a 287-amino-acid chain: Glutamate racemase (287 aa).

Over residues 1–15 (MATKPQDANTTSREA) the composition is skewed to polar residues. The segment at 1-25 (MATKPQDANTTSREAITSKADSPPR) is disordered. Residues 32 to 33 (DS) and 64 to 65 (YG) each bind substrate. The active-site Proton donor/acceptor is the Cys-96. Residue 97 to 98 (NT) coordinates substrate. Cys-208 acts as the Proton donor/acceptor in catalysis. 209–210 (TH) provides a ligand contact to substrate.

It belongs to the aspartate/glutamate racemases family.

The enzyme catalyses L-glutamate = D-glutamate. The protein operates within cell wall biogenesis; peptidoglycan biosynthesis. Its function is as follows. Provides the (R)-glutamate required for cell wall biosynthesis. The polypeptide is Glutamate racemase (Yersinia pseudotuberculosis serotype I (strain IP32953)).